The primary structure comprises 273 residues: Type II iodothyronine deiodinase (273 aa).

Residues 1-9 are Lumenal-facing; that stretch reads MGILSVDLL. The chain crosses the membrane as a helical; Signal-anchor for type III membrane protein span at residues 10-34; the sequence is ITLQILPVFFSNCLFLALYDSVILL. Over 35–273 the chain is Cytoplasmic; the sequence is KHVVLLLSRS…KRUKKTRLAG (239 aa). The active site involves U133. Residues U133 and U266 are each a non-standard amino acid (selenocysteine).

Belongs to the iodothyronine deiodinase family. Predominantly monomer. Can form homodimers but homodimerization is not essential for enzyme activity. Interacts with USP20 and USP33. Interacts with MARCHF6. In terms of processing, ubiquitinated by MARCHF6, leading to its degradation by the proteasome. Deubiquitinated by USP20 and USP33. As to expression, isoform 1 is expressed in the lung, trachea, kidney, heart, skeletal muscle, placenta, fetal brain and several regions of the adult brain. Isoform 2 is expressed in the brain, heart, kidney and trachea.

The protein localises to the endoplasmic reticulum membrane. It carries out the reaction 3,3',5-triiodo-L-thyronine + iodide + A + H(+) = L-thyroxine + AH2. It catalyses the reaction 3,3'-diiodo-L-thyronine + iodide + A + H(+) = 3,3',5'-triiodo-L-thyronine + AH2. The enzyme catalyses 3'-iodo-L-thyronine + iodide + A + H(+) = 3',5'-diiodo-L-thyronine + AH2. The catalysed reaction is 3,3'-diiodothyronamine + iodide + A + H(+) = 3,3',5'-triiodothyronamine + AH2. It carries out the reaction 3'-iodothyronamine + iodide + A + H(+) = 3',5'-diiodothyronamine + AH2. Functionally, plays a crucial role in the metabolism of thyroid hormones (TH) and has specific roles in TH activation and inactivation by deiodination. Catalyzes the deiodination of L-thyroxine (T4) to 3,5,3'-triiodothyronine (T3), 3,3',5'-triiodothyronine (rT3) to 3,3'-diiodothyronine (3,3'-T2) and 3',5'-diiodothyronine (3',5'-T2) to 3'-monoiodothyronine (3'-T1) via outer-ring deiodination (ORD). Catalyzes the phenolic ring deiodinations of 3,3',5'-triiodothyronamine and 3',5'- diiodothyronamine. The polypeptide is Type II iodothyronine deiodinase (DIO2) (Homo sapiens (Human)).